The following is a 409-amino-acid chain: Putative competence-damage inducible protein (409 aa).

Belongs to the CinA family.

The polypeptide is Putative competence-damage inducible protein (Clostridium botulinum (strain Kyoto / Type A2)).